Consider the following 772-residue polypeptide: Polyribonucleotide nucleotidyltransferase (772 aa).

Positions 486 and 492 each coordinate Mg(2+). The KH domain maps to 553 to 612 (PRIETLQIDKSKIRDVIGTGGKVIREIVATTGAKVDIDDEGLIKISSSDLTQIEAAKNWI). An S1 motif domain is found at 622–690 (GKIYKGKVVN…QRGKVRLSMR (69 aa)). Residues 695–772 (ETGAELEDTR…HMPAFLKSDD (78 aa)) form a disordered region. The span at 701 to 760 (EDTRPPREPREPRGDRGDRGDRGDRRGPRGDRGPRREGGDRGPRREGGDRPRRDRDDGPA) shows a compositional bias: basic and acidic residues.

It belongs to the polyribonucleotide nucleotidyltransferase family. Requires Mg(2+) as cofactor.

It localises to the cytoplasm. The enzyme catalyses RNA(n+1) + phosphate = RNA(n) + a ribonucleoside 5'-diphosphate. Functionally, involved in mRNA degradation. Catalyzes the phosphorolysis of single-stranded polyribonucleotides processively in the 3'- to 5'-direction. This is Polyribonucleotide nucleotidyltransferase from Novosphingobium aromaticivorans (strain ATCC 700278 / DSM 12444 / CCUG 56034 / CIP 105152 / NBRC 16084 / F199).